The primary structure comprises 380 residues: uncharacterized protein (380 aa).

Positions 256–301 form a coiled coil; sequence DKEEKIQKSYQYQTELITELQGRIAELEKENQSLKENVKEPETSKP.

This is an uncharacterized protein from Pasteurella multocida (strain Pm70).